A 133-amino-acid polypeptide reads, in one-letter code: Ribonuclease P protein component (133 aa).

Belongs to the RnpA family. In terms of assembly, consists of a catalytic RNA component (M1 or rnpB) and a protein subunit.

The enzyme catalyses Endonucleolytic cleavage of RNA, removing 5'-extranucleotides from tRNA precursor.. RNaseP catalyzes the removal of the 5'-leader sequence from pre-tRNA to produce the mature 5'-terminus. It can also cleave other RNA substrates such as 4.5S RNA. The protein component plays an auxiliary but essential role in vivo by binding to the 5'-leader sequence and broadening the substrate specificity of the ribozyme. The protein is Ribonuclease P protein component of Corynebacterium glutamicum (strain ATCC 13032 / DSM 20300 / JCM 1318 / BCRC 11384 / CCUG 27702 / LMG 3730 / NBRC 12168 / NCIMB 10025 / NRRL B-2784 / 534).